A 286-amino-acid chain; its full sequence is Beta-lactamase SHV-8 (286 aa).

A signal peptide spans 1-21 (MRYIRLCIISLLATLPLAVHA). S66 acts as the Acyl-ester intermediate in catalysis. A disulfide bridge connects residues C73 and C119. E164 (proton acceptor) is an active-site residue. A substrate-binding site is contributed by 230-232 (KTG).

This sequence belongs to the class-A beta-lactamase family.

It carries out the reaction a beta-lactam + H2O = a substituted beta-amino acid. Functionally, SHV enzymes hydrolyze broad spectrum cephalosporins notably cefotaxime and ceftazidime. The chain is Beta-lactamase SHV-8 (bla) from Escherichia coli.